Here is a 1085-residue protein sequence, read N- to C-terminus: Solute carrier family 12 member 4 (1085 aa).

Over 1-119 (MPHFTVVPVD…RRAAKAPSMG (119 aa)) the chain is Cytoplasmic. A phosphoserine mark is found at S24, S47, S51, S81, and S88. Positions 32-56 (AEREDSDGQGNHRENSPFLSPLDAS) are disordered. Residues 120 to 141 (TLMGVYLPCLQNIFGVILFLRL) traverse the membrane as a discontinuously helical segment. K(+)-binding residues include N131 and I132. Topologically, residues 142 to 149 (TWMVGTAG) are extracellular. A helical membrane pass occupies residues 150-172 (VLQALLIVLICCCCTLLTAISMS). The Cytoplasmic segment spans residues 173 to 196 (AIATNGVVPAGGSYFMISRSLGPE). Residues 197–225 (FGGAVGLCFYLGTTFAAAMYILGAIEILL) form a helical membrane-spanning segment. Residue Y216 coordinates K(+). The Extracellular portion of the chain corresponds to 226-248 (TYIAPPAAIFYPSGTHDMSSATL). Helical transmembrane passes span 249-271 (NNMRVYGTIFLTFMTLVVFVGVK) and 272-297 (YVNKFASLFLACVIISILSIYVGGIK). Topologically, residues 298 to 419 (SAFDPPVFPV…LYVVADIATS (122 aa)) are extracellular. An intrachain disulfide couples C308 to C323. Residues N312, N331, and N347 are each glycosylated (N-linked (GlcNAc...) asparagine). C343 and C353 are joined by a disulfide. Residues 420-440 (FTVLVGIFFPSVTGIMAGSNR) form a helical membrane-spanning segment. 2 residues coordinate K(+): P429 and T432. Chloride contacts are provided by G433, I434, and M435. The Cytoplasmic segment spans residues 441–450 (SGDLRDAQKS). The helical transmembrane segment at 451-473 (IPVGTILAIVTTSLVYFSSVILF) threads the bilayer. Residues 474–504 (GACIEGVVLRDKYGDGVSRNLVVGTLAWPSP) are Extracellular-facing. Residues 505-531 (WVIVVGSFFSTCGAGLQSLTGAPRLLQ) traverse the membrane as a helical segment. The Cytoplasmic portion of the chain corresponds to 532–554 (AIAKDNIIPFLRVFGHGKANGEP). A run of 2 helical transmembrane segments spans residues 555–575 (TWALLLTALIAELGILIASLD) and 576–598 (MVAPILSMFFLMCYLFVNLACAV). A chloride-binding site is contributed by Y589. Residues 599–612 (QTLLRTPNWRPRFK) are Cytoplasmic-facing. 2 helical membrane passes run 613 to 635 (YYHWALSFLGMSLCLALMFVSSW) and 636 to 651 (YYALVAMVIAGMIYKY). Residues 652-1085 (IEYQGAEKEW…GGREVITIYS (434 aa)) are Cytoplasmic-facing. The interval 665-681 (IRGLSLSAARYALLRLE) is scissor helix. Positions 697, 699, 707, 708, and 730 each coordinate ATP. S734 is modified (phosphoserine). ATP-binding residues include G794, W795, and Y797. Residues S916 and S967 each carry the phosphoserine modification. T983 carries the phosphothreonine modification. S1050 is modified (phosphoserine).

It belongs to the SLC12A transporter family. K/Cl co-transporter subfamily. In terms of assembly, homodimer; adopts a domain-swap conformation at the scissor helices connecting the transmembrane domain and C-terminal domain. Heterodimer with other K-Cl cotransporters. Post-translationally, N-glycosylated. In terms of processing, phosphorylated, phosphorylation may regulate transporter activity. In terms of tissue distribution, ubiquitous.

It is found in the cell membrane. The enzyme catalyses K(+)(in) + chloride(in) = K(+)(out) + chloride(out). With respect to regulation, inhibited by WNK3. Mediates electroneutral potassium-chloride cotransport when activated by cell swelling. May contribute to cell volume homeostasis in single cells. May be involved in the regulation of basolateral Cl(-) exit in NaCl absorbing epithelia. The chain is Solute carrier family 12 member 4 (Slc12a4) from Rattus norvegicus (Rat).